Reading from the N-terminus, the 375-residue chain is Carbamoyl phosphate synthase small chain (375 aa).

The interval 1 to 186 is CPSase; sequence MRALLALEDG…LEPGGCAWVG (186 aa). Positions 45, 238, and 240 each coordinate L-glutamine. The Glutamine amidotransferase type-1 domain maps to 190-375; the sequence is RLVVYDFGIK…RNMVREAAGC (186 aa). Catalysis depends on Cys-265, which acts as the Nucleophile. L-glutamine-binding residues include Leu-266, Gln-269, Asn-307, Gly-309, and Phe-310. Catalysis depends on residues His-348 and Glu-350.

Belongs to the CarA family. As to quaternary structure, composed of two chains; the small (or glutamine) chain promotes the hydrolysis of glutamine to ammonia, which is used by the large (or ammonia) chain to synthesize carbamoyl phosphate. Tetramer of heterodimers (alpha,beta)4.

It catalyses the reaction hydrogencarbonate + L-glutamine + 2 ATP + H2O = carbamoyl phosphate + L-glutamate + 2 ADP + phosphate + 2 H(+). It carries out the reaction L-glutamine + H2O = L-glutamate + NH4(+). The protein operates within amino-acid biosynthesis; L-arginine biosynthesis; carbamoyl phosphate from bicarbonate: step 1/1. It functions in the pathway pyrimidine metabolism; UMP biosynthesis via de novo pathway; (S)-dihydroorotate from bicarbonate: step 1/3. In terms of biological role, small subunit of the glutamine-dependent carbamoyl phosphate synthetase (CPSase). CPSase catalyzes the formation of carbamoyl phosphate from the ammonia moiety of glutamine, carbonate, and phosphate donated by ATP, constituting the first step of 2 biosynthetic pathways, one leading to arginine and/or urea and the other to pyrimidine nucleotides. The small subunit (glutamine amidotransferase) binds and cleaves glutamine to supply the large subunit with the substrate ammonia. The polypeptide is Carbamoyl phosphate synthase small chain (Nitratidesulfovibrio vulgaris (strain ATCC 29579 / DSM 644 / CCUG 34227 / NCIMB 8303 / VKM B-1760 / Hildenborough) (Desulfovibrio vulgaris)).